The chain runs to 96 residues: UPF0235 protein YggU (96 aa).

It belongs to the UPF0235 family.

In Escherichia coli (strain K12 / MC4100 / BW2952), this protein is UPF0235 protein YggU.